The following is a 489-amino-acid chain: RNA polymerase II subunit 5-mediating protein homolog (489 aa).

Disordered stretches follow at residues 141-188, 200-329, 396-415, and 434-489; these read NSDE…MDEE, EEKE…EEDE, ILKT…SYNE, and FENQ…RQNK. Over residues 157 to 168 the composition is skewed to low complexity; it reads QKSTTTTTTTTT. Composition is skewed to basic and acidic residues over residues 169–188 and 215–224; these read SKDK…MDEE and FNKKFNKKLD. 3 stretches are compositionally biased toward acidic residues: residues 227–265, 276–298, and 315–329; these read GSDE…EDEK, EEDD…EYYD, and QGDD…EEDE. Residues 396–413 show a composition bias toward polar residues; sequence ILKTNSSGNLMSTIPKSY. Over residues 480 to 489 the composition is skewed to basic residues; it reads SRFKSSRQNK.

Belongs to the RNA polymerase II subunit 5-mediating protein family.

It localises to the nucleus. The sequence is that of RNA polymerase II subunit 5-mediating protein homolog (rmp) from Dictyostelium discoideum (Social amoeba).